A 194-amino-acid chain; its full sequence is MLPESFFLNDDVLYLAKELLGHSLVTQIEGKTTSGIIIETEAYRGPDDKACHAYNYRKTQRNLPMYSRGGIAYIYQCYGMHALFNVVTGSQNLPHAVLIRAIAPQKGEDIMIQRRQWQNKPKHLLTNGPGKVCQALNLTLEHNTQSLTSPQIHISQKKISGTITQTPRIGIDYAEEYRDLPWRFLLNIKKSKKI.

This sequence belongs to the DNA glycosylase MPG family.

The protein is Putative 3-methyladenine DNA glycosylase of Chlamydia felis (strain Fe/C-56) (Chlamydophila felis).